The following is a 121-amino-acid chain: Large ribosomal subunit protein bL19 (121 aa).

This sequence belongs to the bacterial ribosomal protein bL19 family.

This protein is located at the 30S-50S ribosomal subunit interface and may play a role in the structure and function of the aminoacyl-tRNA binding site. The chain is Large ribosomal subunit protein bL19 (rplS) from Chlamydia pneumoniae (Chlamydophila pneumoniae).